The sequence spans 588 residues: Adenine deaminase (588 aa).

Belongs to the metallo-dependent hydrolases superfamily. Adenine deaminase family. In terms of assembly, homodimer. The cofactor is Mn(2+).

The enzyme catalyses adenine + H2O + H(+) = hypoxanthine + NH4(+). This is Adenine deaminase from Shigella flexneri.